Here is a 193-residue protein sequence, read N- to C-terminus: MRTRLRFVLVAAALALLSACKEDVAQSIVPQDMTPETLGHYCQMNLLEHPGPKAQIFLEGSPAPLFFSQVRDAIAYARGPEQIAPILVIYVNDMGAAGATWDQPGDGNWIAADKAFYVVGSARRGGMGAPEAVPFSSRDEAAAFVLAEGGQVLALADITDAMVLTPVETGSEPRADDEDYLGRLRALPHPAGG.

The N-terminal stretch at 1 to 19 (MRTRLRFVLVAAALALLSA) is a signal peptide. A lipid anchor (N-palmitoyl cysteine) is attached at cysteine 20. The S-diacylglycerol cysteine moiety is linked to residue cysteine 20.

Belongs to the NosL family. As to quaternary structure, monomer. Apo-NosL can form homodimers.

It localises to the cell membrane. May act as a metallochaperone involved in nitrous oxide reductase assembly. Specifically binds Cu(+). This Achromobacter cycloclastes protein is Copper-binding lipoprotein NosL.